The primary structure comprises 370 residues: Glutamate 5-kinase (370 aa).

Lys17 is a binding site for ATP. Ser56, Asp143, and Asn155 together coordinate substrate. 175–176 (SD) provides a ligand contact to ATP. The 78-residue stretch at 280-357 (KGEITVDAGA…DEIEGILGYP (78 aa)) folds into the PUA domain.

It belongs to the glutamate 5-kinase family.

Its subcellular location is the cytoplasm. The enzyme catalyses L-glutamate + ATP = L-glutamyl 5-phosphate + ADP. It functions in the pathway amino-acid biosynthesis; L-proline biosynthesis; L-glutamate 5-semialdehyde from L-glutamate: step 1/2. Its function is as follows. Catalyzes the transfer of a phosphate group to glutamate to form L-glutamate 5-phosphate. This Paracoccus denitrificans (strain Pd 1222) protein is Glutamate 5-kinase.